The sequence spans 187 residues: Thioredoxin F, chloroplastic (187 aa).

Residues 1–72 constitute a chloroplast transit peptide; that stretch reads MALRLSVSSS…GSDTATVGAE (72 aa). The Thioredoxin domain occupies 73 to 186; sequence AEAVAVTGQV…LIQAIETVKS (114 aa). Catalysis depends on nucleophile residues C111 and C114. C111 and C114 are disulfide-bonded.

This sequence belongs to the thioredoxin family. Plant F-type subfamily.

Its subcellular location is the plastid. The protein localises to the chloroplast. Its function is as follows. Thiol-disulfide oxidoreductase involved in the redox regulation of enzymes of both reductive pentose phosphate pathway (Calvin-Benson cycle) and oxidative pentose phosphate pathway. This chain is Thioredoxin F, chloroplastic, found in Oryza sativa subsp. japonica (Rice).